Here is a 570-residue protein sequence, read N- to C-terminus: Proline--tRNA ligase (570 aa).

It belongs to the class-II aminoacyl-tRNA synthetase family. ProS type 1 subfamily. In terms of assembly, homodimer.

It localises to the cytoplasm. The enzyme catalyses tRNA(Pro) + L-proline + ATP = L-prolyl-tRNA(Pro) + AMP + diphosphate. In terms of biological role, catalyzes the attachment of proline to tRNA(Pro) in a two-step reaction: proline is first activated by ATP to form Pro-AMP and then transferred to the acceptor end of tRNA(Pro). As ProRS can inadvertently accommodate and process non-cognate amino acids such as alanine and cysteine, to avoid such errors it has two additional distinct editing activities against alanine. One activity is designated as 'pretransfer' editing and involves the tRNA(Pro)-independent hydrolysis of activated Ala-AMP. The other activity is designated 'posttransfer' editing and involves deacylation of mischarged Ala-tRNA(Pro). The misacylated Cys-tRNA(Pro) is not edited by ProRS. The polypeptide is Proline--tRNA ligase (Thermoanaerobacter pseudethanolicus (strain ATCC 33223 / 39E) (Clostridium thermohydrosulfuricum)).